A 157-amino-acid polypeptide reads, in one-letter code: Fimbrial protein Q (157 aa).

Positions 1–6 are excised as a propeptide; that stretch reads MNAQKG. The residue at position 7 (F7) is an N-methylphenylalanine. A disulfide bond links C136 and C155.

Belongs to the N-Me-Phe pilin family. As to quaternary structure, the pili are polar flexible filaments of about 5.4 nanometers diameter and 2.5 micrometers average length; they consist of only a single polypeptide chain arranged in a helical configuration of five subunits per turn in the assembled pilus.

It localises to the fimbrium. The chain is Fimbrial protein Q (tfpQ) from Moraxella bovis.